An 89-amino-acid polypeptide reads, in one-letter code: Small ribosomal subunit protein uS15 (89 aa).

Belongs to the universal ribosomal protein uS15 family. In terms of assembly, part of the 30S ribosomal subunit. Forms a bridge to the 50S subunit in the 70S ribosome, contacting the 23S rRNA.

Functionally, one of the primary rRNA binding proteins, it binds directly to 16S rRNA where it helps nucleate assembly of the platform of the 30S subunit by binding and bridging several RNA helices of the 16S rRNA. Its function is as follows. Forms an intersubunit bridge (bridge B4) with the 23S rRNA of the 50S subunit in the ribosome. The chain is Small ribosomal subunit protein uS15 from Staphylococcus aureus (strain JH1).